The sequence spans 252 residues: Adenosylcobinamide-GDP ribazoletransferase (252 aa).

5 helical membrane passes run 33 to 53 (FISP…VVLL), 105 to 125 (TGSG…IATL), 132 to 152 (LWFF…LLGL), 184 to 204 (FAIL…LLVF), and 215 to 235 (MSGD…LLVA).

This sequence belongs to the CobS family. Mg(2+) serves as cofactor.

It is found in the cell membrane. It catalyses the reaction alpha-ribazole + adenosylcob(III)inamide-GDP = adenosylcob(III)alamin + GMP + H(+). The enzyme catalyses alpha-ribazole 5'-phosphate + adenosylcob(III)inamide-GDP = adenosylcob(III)alamin 5'-phosphate + GMP + H(+). It participates in cofactor biosynthesis; adenosylcobalamin biosynthesis; adenosylcobalamin from cob(II)yrinate a,c-diamide: step 7/7. Joins adenosylcobinamide-GDP and alpha-ribazole to generate adenosylcobalamin (Ado-cobalamin). Also synthesizes adenosylcobalamin 5'-phosphate from adenosylcobinamide-GDP and alpha-ribazole 5'-phosphate. The polypeptide is Adenosylcobinamide-GDP ribazoletransferase (Sulfolobus acidocaldarius (strain ATCC 33909 / DSM 639 / JCM 8929 / NBRC 15157 / NCIMB 11770)).